Here is a 280-residue protein sequence, read N- to C-terminus: Diaminopimelate epimerase (280 aa).

Asn-11 and Asn-64 together coordinate substrate. The active-site Proton donor is Cys-73. Substrate-binding positions include 74-75 (GN), Asn-162, Asn-195, and 213-214 (ER). Catalysis depends on Cys-222, which acts as the Proton acceptor. 223 to 224 (GT) lines the substrate pocket.

The protein belongs to the diaminopimelate epimerase family. Homodimer.

It localises to the cytoplasm. The enzyme catalyses (2S,6S)-2,6-diaminopimelate = meso-2,6-diaminopimelate. Its pathway is amino-acid biosynthesis; L-lysine biosynthesis via DAP pathway; DL-2,6-diaminopimelate from LL-2,6-diaminopimelate: step 1/1. Its function is as follows. Catalyzes the stereoinversion of LL-2,6-diaminopimelate (L,L-DAP) to meso-diaminopimelate (meso-DAP), a precursor of L-lysine and an essential component of the bacterial peptidoglycan. The polypeptide is Diaminopimelate epimerase (Pelotomaculum thermopropionicum (strain DSM 13744 / JCM 10971 / SI)).